A 216-amino-acid chain; its full sequence is Soluble inorganic pyrophosphatase 3 (216 aa).

The segment covering 1–10 (MSEEAYEETQ) has biased composition (acidic residues). Residues 1 to 21 (MSEEAYEETQESSQSPRPVPK) form a disordered region. Residues Lys66 and Arg80 each coordinate substrate. Tyr88 acts as the Proton donor in catalysis. Tyr92 serves as a coordination point for substrate. Asp102, Asp107, and Asp139 together coordinate Mg(2+). Residue Tyr176 coordinates substrate.

Belongs to the PPase family. Requires Mg(2+) as cofactor. Expressed preferentially in stamen, pollen and flower, and at a low level in lateral roots and root elongation zones.

The protein localises to the cytoplasm. The catalysed reaction is diphosphate + H2O = 2 phosphate + H(+). This Arabidopsis thaliana (Mouse-ear cress) protein is Soluble inorganic pyrophosphatase 3.